A 289-amino-acid polypeptide reads, in one-letter code: Shikimate dehydrogenase (NADP(+)) (289 aa).

Residues 22–24 (SRS) and Thr69 each bind shikimate. Lys73 acts as the Proton acceptor in catalysis. Glu85 is an NADP(+) binding site. Residues Asn94 and Asp109 each coordinate shikimate. Residues 134 to 138 (GAGGA), 158 to 163 (NRTLSR), and Ile226 contribute to the NADP(+) site. Tyr228 contacts shikimate. Gly249 is an NADP(+) binding site.

It belongs to the shikimate dehydrogenase family. In terms of assembly, homodimer.

It catalyses the reaction shikimate + NADP(+) = 3-dehydroshikimate + NADPH + H(+). Its pathway is metabolic intermediate biosynthesis; chorismate biosynthesis; chorismate from D-erythrose 4-phosphate and phosphoenolpyruvate: step 4/7. In terms of biological role, involved in the biosynthesis of the chorismate, which leads to the biosynthesis of aromatic amino acids. Catalyzes the reversible NADPH linked reduction of 3-dehydroshikimate (DHSA) to yield shikimate (SA). The chain is Shikimate dehydrogenase (NADP(+)) from Brucella abortus (strain S19).